Consider the following 479-residue polypeptide: MDATIAPHRIPPEMPQYGEENHIFELMQNMLEQLLIHQPEDPIPFMIQHLHRDNDNVPRIVILGPPASGKTTIAMWLCKHLNSSLLTLENLILNEFSYTATEARRLYLQRKTVPSALLVQLIQERLAEEDCIKQGWILDGIPETREQALRIQTLGITPRHVIVLSAPDTVLIERNLGKRIDPQTGEIYHTTFDWPPESEIQNRLMVPEDISELETAQKLLEYHRNIVRVIPSYPKILKVISADQPCVDVFYQALTYVQSNHRTNAPFTPRVLLLGPVGSGKSLQAALLAQKYRLVNVCCGQLLKEAVADRTTFGELIQPFFEKEMAVPDSLLMKVLSQRLDQQDCIQKGWVLHGVPRDLDQAHLLNRLGYNPNRVFFLNVPFDSIMERLTLRRIDPVTGERYHLMYKPPPTMEIQARLLQNPKDAEEQVKLKMDLFYRNSADLEQLYGSAITLNGDQDPYTVFEYIESGIINPLPKKIP.

2 adenylate kinase regions span residues P58 to Q258 and P269 to I471. A67–T72 lines the ATP pocket. Residues T87 to V113 form an NMP 1 region. Residues G140–E143, Q147, and R203 contribute to the AMP site. Residues G177–V206 are LID 1. G278–L283 is an ATP binding site. Residues C298–V327 are NMP 2. Residues M325 to V327, G354 to R357, and Q361 each bind AMP. The interval L391–D424 is LID 2. R392 provides a ligand contact to ATP.

It belongs to the adenylate kinase family. Interacts with CFAP45 and CFAP52; CFAP45 and AK8 dimerization may create a cavity at the interface of the dimer that can accommodate AMP. As to expression, expressed in respiratory cells (at protein level).

It is found in the cytoplasm. It localises to the cytosol. The protein localises to the cytoskeleton. The protein resides in the cilium axoneme. The enzyme catalyses AMP + ATP = 2 ADP. It carries out the reaction a 2'-deoxyribonucleoside 5'-diphosphate + ATP = a 2'-deoxyribonucleoside 5'-triphosphate + ADP. The catalysed reaction is a ribonucleoside 5'-diphosphate + ATP = a ribonucleoside 5'-triphosphate + ADP. Nucleoside monophosphate (NMP) kinase that catalyzes the reversible transfer of the terminal phosphate group between nucleoside triphosphates and monophosphates. Has highest activity toward AMP, and weaker activity toward dAMP, CMP and dCMP. Also displays broad nucleoside diphosphate kinase activity. In Homo sapiens (Human), this protein is Adenylate kinase 8 (AK8).